We begin with the raw amino-acid sequence, 61 residues long: Short neurotoxin 1 (61 aa).

4 disulfides stabilise this stretch: cysteine 3/cysteine 23, cysteine 17/cysteine 40, cysteine 42/cysteine 53, and cysteine 54/cysteine 59.

It belongs to the three-finger toxin family. Short-chain subfamily. Type I alpha-neurotoxin sub-subfamily. In terms of tissue distribution, expressed by the venom gland.

The protein resides in the secreted. Binds to muscle nicotinic acetylcholine receptor (nAChR) and inhibit acetylcholine from binding to the receptor, thereby impairing neuromuscular transmission. Its function is as follows. Produces peripheral paralysis by blocking neuromuscular transmission at the postsynaptic site. Binds to the muscular nicotinic acetylcholine receptor. This chain is Short neurotoxin 1, found in Naja annulifera (Banded Egyptian cobra).